Consider the following 126-residue polypeptide: Glycine cleavage system H protein (126 aa).

Residues 24 to 106 enclose the Lipoyl-binding domain; it reads TITVGITDHA…YGEGWFFRMK (83 aa). Lysine 65 bears the N6-lipoyllysine mark.

It belongs to the GcvH family. The glycine cleavage system is composed of four proteins: P, T, L and H. The cofactor is (R)-lipoate.

Its function is as follows. The glycine cleavage system catalyzes the degradation of glycine. The H protein shuttles the methylamine group of glycine from the P protein to the T protein. The chain is Glycine cleavage system H protein from Psychrobacter arcticus (strain DSM 17307 / VKM B-2377 / 273-4).